Here is a 32-residue protein sequence, read N- to C-terminus: Conotoxin pr6d (32 aa).

Pro-5 carries the 4-hydroxyproline modification. 3 cysteine pairs are disulfide-bonded: Cys-7–Cys-20, Cys-14–Cys-25, and Cys-19–Cys-30.

As to expression, expressed by the venom duct.

It localises to the secreted. This is Conotoxin pr6d from Conus parius (Cone snail).